Reading from the N-terminus, the 1933-residue chain is MLFHFFLRCNLASLCIKIVNSVVVVGLYYGLLTTFSIGPSYFFLLRAQVMEEGTEKKVSATTGFITGQLIMFISIYYAPLHRALARPHTITVLALPYLFVYFIFYTDKRFMHPRKNAMLNTTTSMRNFSIQCVFLNNLIFQLFNHFILPSSMVARLVNIYMFRCNNKMLFVTSSFVGWLIGHILFWKWLGLVLVWIRQNRSIRIRPNKYIPFYKLIRLDKYLVSKWGDRIFYILVILIWFYLGGKIPAPLLSMKFDESTIQLEKGAKGKKKKRGKGEEEGDVEKEDEVGVGEKKGEIDESEEIRVNGELFKSLVAHFFVFDPNHFATLLFDPNRWNRPFRYIKNDRFDNAFRTEMSQYFFDTCPSAGKERISFTYPPSLSTFWEMIERRISLPTLDKFSSNELSNHWVYTNEQKSNNLKNEFVNRIEALDKESVSLNRLETTSRLCNDNTTKEYLPEPYDPFLNGPYRRTIKKTKSLSPEKTSGDNLETSRDNLETSRDNLETSRDNLETSRDNLETSRDNLIDKIGINRIHSILLPDIPDTDYQKLEDQFDKKQLSIEIVDLFTFAFISEFGKKKGPKSESNLISRDLLISRDLSVFSDEKEVRIEDGKGVIIDDEKGKKYFEYLENRIGTNTDDENIDKDSIAKIRKKVSRWIYNATSELDQAYGEDERKDPMDNEIRSRDAKRVIVVPKEKLERDDDDDEEEPTDIDKIIFPEHGDFRRDVIWGSIRAQRRKIVIWRTLQRYTHSPLFLDSLKDFRHYFVDFLLDILNIFEPIWRIIRNLRIFLIKLIRKRFALKILEHREEQQTHREEKKKRKKDEKNEKNAKNAEDPEREPRLWVSEFWTIIEYAQEVRGCVLLTHSFIRRNIVIPLLIIVKNIGRMLLFQRPELYEDFEDWQRESHVKCTYEGIPLSETDFPEDWLVEGIQIKILYPFRLKPWHVPGSDSDQNRKKAEEKGDFCFLTVYGTETNLPFGYSRLPPPTFESFFKPIFQELKKQMRNSKKNIWKLGKMLFQKVKGTKFLRKVAKKWVRKSIILGKKIIEGLKKIKELVKKERDPITSNQMIPESFTQISSPSSTNSEKKRNKMQDLTNRANKARNEIERIRKEKKKKKRSLKKTSSNAKRLQRIKDRLIRKLPVYLKLFIQRIYTGIFFSIINIRRMSQKFRNKFIPDQERKDILPFIYTINKIKESLYTNNSEENSHIFYDLSYLSQAYVFYKLSEIQLSNLDKFKSVLQYQGIPFFLRSEIKDSFKTQGIVHSKRLPSSEMNQWKNWLRGHSQYDLSKTRWSILIPQRWRNRVHRMVKRKNFNKRNLYEKYEKDQFIDSKKENICEVSNRNQKDDNFQKCCKYDLLSYKSIHSENKKDSRSLFDKLSFNSNTAFFDLLVDRARGMPIDINNLTGTGDIPYTEKTPDRKYLDWKMIHFDFIRNQLDIENWITIDVNRKDNRNQKTPIYTNNYLTNDHDTNFEIIYKIDKKTKKPILDLDFLRIPEKNPSNSSKGFLDWMGLNETQTHPVVLNKFNRLKMEANLFPEIVLFYNAYKTQPWLLSSKLLLLNLNNNENEINADNEKNEKKEAKKEAKKEAKKEAKKEEKQNIKKELTTKGDLENKGDLESVPSKEKNPSKDSKEKKDIQKDSAESTTKKVTSKELQKELDAFLQRYSGYLVKWNRRVDPDIVPKSEINWEVYSYLYRLFDDENPRNRKEIDPTHLVLSSAKRGELAFEILATRPIQSWKKLLLKRKELVFFEPIRLFGKNNGQFIMYQTIGISLVHNNKHEIQPRFRKKKKRYGSKTNFDESIPPHERITRNDERIPTNDEDEKRNKRLRINYERNADKNHLDLLVPENIFSFRRRRKLRILNCLNSKNRNDVDRNPVFCNEKNSSQDLDREKNLLMKLKFFLWPNYRLEDLACMNRYWFDTNNGSRFSMLRIRLYPRLKIR.

6 helical membrane-spanning segments follow: residues 18–38, 60–80, 87–107, 128–148, 176–196, and 230–250; these read IVNS…FSIG, ATTG…YAPL, PHTI…FYTD, FSIQ…HFIL, VGWL…LVWI, and IFYI…PAPL. Disordered stretches follow at residues 266–291, 473–514, 808–832, and 1066–1121; these read AKGK…VGVG, KTKS…SRDN, THRE…AEDP, and ESFT…SSNA. Over residues 278 to 289 the composition is skewed to acidic residues; the sequence is EEGDVEKEDEVG. Residues 476 to 487 show a composition bias toward polar residues; sequence SLSPEKTSGDNL. Composition is skewed to basic and acidic residues over residues 488 to 514 and 819 to 832; these read ETSR…SRDN and DEKN…AEDP. Positions 1066–1078 are enriched in polar residues; it reads ESFTQISSPSSTN. A compositionally biased stretch (basic residues) spans 1105–1115; the sequence is KEKKKKKRSLK. The helical transmembrane segment at 1135-1155 threads the bilayer; that stretch reads LPVYLKLFIQRIYTGIFFSII. The tract at residues 1562 to 1642 is disordered; it reads NADNEKNEKK…SAESTTKKVT (81 aa). Positions 1564–1642 are enriched in basic and acidic residues; sequence DNEKNEKKEA…SAESTTKKVT (79 aa).

This sequence belongs to the TIC214 family. As to quaternary structure, part of the Tic complex.

It is found in the plastid. The protein resides in the chloroplast inner membrane. Its function is as follows. Involved in protein precursor import into chloroplasts. May be part of an intermediate translocation complex acting as a protein-conducting channel at the inner envelope. The chain is Protein TIC 214 from Jasminum nudiflorum (Winter jasmine).